The primary structure comprises 524 residues: Chitinase D (524 aa).

The first 30 residues, 1-30 (MNQAVRFRPVITFALAFILIITWFAPRADA), serve as a signal peptide directing secretion. Positions 95–180 (VPAGLTSSLV…TSLSVTTSTG (86 aa)) constitute a Fibronectin type-III domain. Positions 190–514 (KWLIGYWHNF…NAHRPFLNGL (325 aa)) constitute a GH18 domain. E303 serves as the catalytic Proton donor.

The protein belongs to the glycosyl hydrolase 18 family. Chitinase class II subfamily.

It catalyses the reaction Random endo-hydrolysis of N-acetyl-beta-D-glucosaminide (1-&gt;4)-beta-linkages in chitin and chitodextrins.. This Niallia circulans (Bacillus circulans) protein is Chitinase D (chiD).